Here is a 43-residue protein sequence, read N- to C-terminus: Iota-conotoxin-like S11.2 (43 aa).

Cystine bridges form between Cys-2/Cys-16, Cys-9/Cys-19, Cys-15/Cys-24, and Cys-18/Cys-35. Met-41 carries the post-translational modification D-methionine. Position 43 (Arg-43) is a propeptide, removed by a carboxypeptidase.

The protein belongs to the conotoxin I1 superfamily. Expressed by the venom duct.

It localises to the secreted. In terms of biological role, iota-conotoxins bind to voltage-gated sodium channels (Nav) and act as agonists by shifting the voltage-dependence of activation to more hyperpolarized levels. Produces general excitatory symptoms. This Conus striatus (Striated cone) protein is Iota-conotoxin-like S11.2.